A 434-amino-acid polypeptide reads, in one-letter code: Glutamate-1-semialdehyde 2,1-aminomutase 1 (434 aa).

K270 carries the post-translational modification N6-(pyridoxal phosphate)lysine.

Belongs to the class-III pyridoxal-phosphate-dependent aminotransferase family. HemL subfamily. In terms of assembly, homodimer. Pyridoxal 5'-phosphate serves as cofactor.

The protein resides in the cytoplasm. It carries out the reaction (S)-4-amino-5-oxopentanoate = 5-aminolevulinate. It participates in porphyrin-containing compound metabolism; protoporphyrin-IX biosynthesis; 5-aminolevulinate from L-glutamyl-tRNA(Glu): step 2/2. The sequence is that of Glutamate-1-semialdehyde 2,1-aminomutase 1 from Bacillus thuringiensis subsp. konkukian (strain 97-27).